A 487-amino-acid chain; its full sequence is GlcNAc-binding protein A (487 aa).

The signal sequence occupies residues 1 to 29 (MKKLPNKSLIALALLSVSGASFGHGYVSA). One can recognise a Chitin-binding type-4 domain in the interval 30–201 (YENGVAEGRA…SFYNVIDVKF (172 aa)). The 42-residue stretch at 438–479 (AGTKVLASDGAVYQCKEFPFSGYCTQWSPSATQFEPGKGSHW) folds into the Chitin-binding type-3 domain.

Belongs to the GbpA family.

It localises to the secreted. Probably interacts with GlcNAc residues. May promote attachment to both epithelial cell surfaces and chitin. The chain is GlcNAc-binding protein A from Vibrio campbellii (strain ATCC BAA-1116).